The sequence spans 1923 residues: GREB1-like protein (1923 aa).

Acidic residues predominate over residues Glu-87–Ser-96. 3 disordered regions span residues Glu-87 to Pro-111, Ser-246 to Lys-326, and Arg-1101 to Arg-1222. Residues Pro-252–Pro-262 are compositionally biased toward low complexity. Polar residues-rich tracts occupy residues Glu-263 to Asp-278, Thr-296 to Pro-307, and Pro-1119 to Thr-1161. Residues Ser-1195 to Ser-1206 are compositionally biased toward low complexity. The helical transmembrane segment at Gly-1843–Leu-1862 threads the bilayer.

The protein belongs to the GREB1 family. As to expression, widely expressed, with prominent expression in the cochlea. Expressed at high levels in fetal kidney. In adult tissues, highest levels in vagina, cervix and epididymis.

It is found in the membrane. In terms of biological role, plays a major role in early metanephros and genital development. This is GREB1-like protein (GREB1L) from Homo sapiens (Human).